The primary structure comprises 96 residues: Plasminogen-like protein B (96 aa).

The signal sequence occupies residues 1-19 (MEHKEVVLLLLLFLKSGQG). The PAN domain maps to 20–96 (EPLDDYVNTQ…RMRDAVLFEK (77 aa)). 2 disulfide bridges follow: Cys-49–Cys-73 and Cys-53–Cys-61.

It is found in the secreted. Functionally, may bind noncovalently to lysine binding sites present in the kringle structures of plasminogen. This may interfere with the binding of fibrin or alpha-2-antiplasmin to plasminogen and may result in the localization of activity at sites necessary for extracellular matrix destruction. This Homo sapiens (Human) protein is Plasminogen-like protein B (PLGLB1).